Here is a 347-residue protein sequence, read N- to C-terminus: Protein YIPF1 homolog (347 aa).

Residues 1 to 115 (MSNYNNKHHD…FSDNVPLNTN (115 aa)) are disordered. At 1 to 166 (MSNYNNKHHD…FFNLIRENPD (166 aa)) the chain is on the cytoplasmic side. A compositionally biased stretch (polar residues) spans 34–47 (NLFPNTNIDYNDYT). Composition is skewed to low complexity over residues 48–67 (QNRG…LQFQ) and 76–104 (NSNT…SSNN). Residues 105–115 (KFSDNVPLNTN) show a composition bias toward polar residues. Residues 167–187 (LYGPFWVLTSLVFIVAVTSNL) form a helical membrane-spanning segment. The Lumenal portion of the chain corresponds to 188–207 (NEYFHSSDHKSWEVDIQKIV). The chain crosses the membrane as a helical span at residues 208 to 228 (YSAITIYGYSFVIPLILWGIF). Residues 229–232 (KWMN) are Cytoplasmic-facing. Residues 233–253 (LGLRLLDMLCIYGYTLFIFVP) traverse the membrane as a helical segment. Over 254 to 255 (AS) the chain is Lumenal. The chain crosses the membrane as a helical span at residues 256–276 (ILCVIPLQLVQWIIVAIASIV). Residues 277 to 296 (SGLFLVTNIFTPLKEDFTKR) are Cytoplasmic-facing. The chain crosses the membrane as a helical span at residues 297–317 (GLIICAVIGALHIGLALVLKL). The Lumenal segment spans residues 318–347 (YFFANSTENFTISDSSSTPTPTPTNTTKLL). 3 N-linked (GlcNAc...) asparagine glycosylation sites follow: Asn-322, Asn-326, and Asn-342.

Belongs to the YIP1 family.

The protein resides in the golgi apparatus. The protein localises to the cis-Golgi network membrane. It localises to the trans-Golgi network membrane. Its subcellular location is the late endosome membrane. The chain is Protein YIPF1 homolog (yipf1) from Dictyostelium discoideum (Social amoeba).